A 285-amino-acid polypeptide reads, in one-letter code: Eukaryotic translation initiation factor 3 subunit F-2 (285 aa).

The MPN domain maps to 11-145 (VVLQPLVLFQ…TRLYCGVEMG (135 aa)).

It belongs to the eIF-3 subunit F family. Component of the eukaryotic translation initiation factor 3 (eIF-3) complex. The eIF-3 complex interacts with pix.

The protein resides in the cytoplasm. In terms of biological role, component of the eukaryotic translation initiation factor 3 (eIF-3) complex, which is involved in protein synthesis of a specialized repertoire of mRNAs and, together with other initiation factors, stimulates binding of mRNA and methionyl-tRNAi to the 40S ribosome. The eIF-3 complex specifically targets and initiates translation of a subset of mRNAs involved in cell proliferation. The polypeptide is Eukaryotic translation initiation factor 3 subunit F-2 (Drosophila ananassae (Fruit fly)).